Reading from the N-terminus, the 78-residue chain is Longicornsin (78 aa).

The first 22 residues, 1 to 22 (MAESTTTCFLLLVTGYVTAVMS), serve as a signal peptide directing secretion. Residues 23 to 29 (EEAHLRS) constitute a propeptide that is removed on maturation. 3 cysteine pairs are disulfide-bonded: Cys-35–Cys-58, Cys-43–Cys-63, and Cys-47–Cys-65.

As to expression, salivary glands (at protein level).

The protein localises to the secreted. In terms of biological role, has antibacterial activity against the Gram-positive bacteria S.aureus ATCC2592 (MIC=0.8 ug/ml), S.aureus 6A (MIC=0.8 ug/ml) and S.aureus 15A (MIC=1.6 ug/ml), and against the Gram-negative bacteria E.coli ATCC 25922 (MIC=3.2 ug/ml), E.coli 23A (MIC=6.4 ug/ml), E.coli 27A (MIC=6.4 ug/ml), P.aeruginosa 3A (MIC=3.2 ug/ml), P.aeruginosa 7A (MIC=0.8 ug/ml) and H.pylori NCTC11637 (MIC=6.4 ug/ml). Has antifungal activity against C.albidus ATCC2002 (MIC=25.6 ug/ml). Very low hemolytic activity against rabbit erythrocytes. This is Longicornsin from Haemaphysalis longicornis (Bush tick).